The chain runs to 456 residues: Probable hexose phosphate transport protein (456 aa).

11 consecutive transmembrane segments (helical) span residues 34–54, 70–90, 113–133, 161–181, 185–205, 257–277, 302–322, 331–351, 363–383, 394–414, and 421–441; these read IFYS…SFTF, LGII…VSGV, IFFG…INGW, VWST…GVAI, GWRG…FILI, YVLS…IYVV, LCVS…GWLS, GPMN…LWGT, FLFI…LAAA, ASGF…YPLG, and GWHG…ILFL.

It belongs to the major facilitator superfamily. Organophosphate:Pi antiporter (OPA) (TC 2.A.1.4) family.

The protein localises to the cell membrane. Transport protein for sugar phosphate uptake. This chain is Probable hexose phosphate transport protein, found in Chlamydia trachomatis serovar D (strain ATCC VR-885 / DSM 19411 / UW-3/Cx).